The following is a 249-amino-acid chain: Tetraspanin-18 (249 aa).

At 1 to 13 (MEGDCLSCMKYLM) the chain is on the cytoplasmic side. Residues 14 to 34 (FVFNFFIFLGGACLLGIGIWV) form a helical membrane-spanning segment. The Extracellular segment spans residues 35 to 49 (MVDPTGFREIVAANP). A helical transmembrane segment spans residues 50-70 (LLITGAYILLAMGGLLFLLGF). Topologically, residues 71 to 83 (LGCCGAVRENKCL) are cytoplasmic. A helical transmembrane segment spans residues 84 to 104 (LLFFFLFILIIFLAELSAAIL). The Extracellular segment spans residues 105-223 (AFIFRGNLTR…AFETYVYLAG (119 aa)). 2 N-linked (GlcNAc...) asparagine glycosylation sites follow: Asn-111 and Asn-129. The helical transmembrane segment at 224–244 (ALAIGVLAIELFAMIFAMCLF) threads the bilayer. Residues 245-249 (RGIIQ) are Cytoplasmic-facing.

It belongs to the tetraspanin (TM4SF) family. Interacts with ORAI1; this interaction regulates ORAI1 exit from the endoplasmic (ER), and/or Golgi, and trafficking to the cell surface.

The protein localises to the membrane. In terms of biological role, plays a role in the cell surface localization of ORAI1 and may participate in the regulation of Ca(2+) signaling and the VWF release in response to inflammatory stimuli. In Bos taurus (Bovine), this protein is Tetraspanin-18.